Here is a 283-residue protein sequence, read N- to C-terminus: Ribosomal RNA small subunit methyltransferase I (283 aa).

This sequence belongs to the methyltransferase superfamily. RsmI family.

The protein localises to the cytoplasm. It catalyses the reaction cytidine(1402) in 16S rRNA + S-adenosyl-L-methionine = 2'-O-methylcytidine(1402) in 16S rRNA + S-adenosyl-L-homocysteine + H(+). In terms of biological role, catalyzes the 2'-O-methylation of the ribose of cytidine 1402 (C1402) in 16S rRNA. This is Ribosomal RNA small subunit methyltransferase I from Haemophilus influenzae (strain ATCC 51907 / DSM 11121 / KW20 / Rd).